We begin with the raw amino-acid sequence, 503 residues long: Maturase K (503 aa).

Belongs to the intron maturase 2 family. MatK subfamily.

Its subcellular location is the plastid. It is found in the chloroplast. Functionally, usually encoded in the trnK tRNA gene intron. Probably assists in splicing its own and other chloroplast group II introns. The protein is Maturase K of Backhousia subargentea (Giant ironwood).